The sequence spans 220 residues: NADH-quinone oxidoreductase subunit I (220 aa).

4Fe-4S ferredoxin-type domains follow at residues 71-102 and 112-141; these read LQRL…IITH and DSYT…MGNR. [4Fe-4S] cluster is bound by residues cysteine 82, cysteine 85, cysteine 88, cysteine 92, cysteine 121, cysteine 124, cysteine 127, and cysteine 131. The interval 187-220 is disordered; sequence MQATPLDYVQEPSKEESKEETPTNPESNKGDENV. Residues 198–207 show a composition bias toward basic and acidic residues; that stretch reads PSKEESKEET.

This sequence belongs to the complex I 23 kDa subunit family. As to quaternary structure, NDH-1 is composed of 14 different subunits. Subunits NuoA, H, J, K, L, M, N constitute the membrane sector of the complex. It depends on [4Fe-4S] cluster as a cofactor.

It is found in the cell inner membrane. It carries out the reaction a quinone + NADH + 5 H(+)(in) = a quinol + NAD(+) + 4 H(+)(out). Its function is as follows. NDH-1 shuttles electrons from NADH, via FMN and iron-sulfur (Fe-S) centers, to quinones in the respiratory chain. The immediate electron acceptor for the enzyme in this species is believed to be ubiquinone. Couples the redox reaction to proton translocation (for every two electrons transferred, four hydrogen ions are translocated across the cytoplasmic membrane), and thus conserves the redox energy in a proton gradient. The sequence is that of NADH-quinone oxidoreductase subunit I from Helicobacter pylori (strain HPAG1).